We begin with the raw amino-acid sequence, 419 residues long: Protein FAM217A (419 aa).

Disordered stretches follow at residues 1-60 (MGRK…LENP), 96-119 (KGST…DLSE), 236-299 (SSSK…SRAL), and 317-382 (KNSK…RTKK). Low complexity predominate over residues 7–19 (ESCSSSLHVSSIS). The span at 236–251 (SSSKAIATKAKAPKIP) shows a compositional bias: low complexity. Composition is skewed to polar residues over residues 252–261 (ETSTLQTSGV) and 271–281 (NSGSGKPEQNV). 2 stretches are compositionally biased toward low complexity: residues 282-296 (SKWS…KSNS) and 334-345 (PTTTTQATQPMA).

The protein belongs to the FAM217 family.

The sequence is that of Protein FAM217A (Fam217a) from Mus musculus (Mouse).